A 480-amino-acid polypeptide reads, in one-letter code: Glutamate--tRNA ligase (480 aa).

Positions 9–19 (PSPTGDPHVGT) match the 'HIGH' region motif. Positions 253–257 (KISKR) match the 'KMSKS' region motif. Lysine 256 lines the ATP pocket.

It belongs to the class-I aminoacyl-tRNA synthetase family. Glutamate--tRNA ligase type 1 subfamily. Monomer.

It is found in the cytoplasm. It carries out the reaction tRNA(Glu) + L-glutamate + ATP = L-glutamyl-tRNA(Glu) + AMP + diphosphate. Catalyzes the attachment of glutamate to tRNA(Glu) in a two-step reaction: glutamate is first activated by ATP to form Glu-AMP and then transferred to the acceptor end of tRNA(Glu). In Deinococcus geothermalis (strain DSM 11300 / CIP 105573 / AG-3a), this protein is Glutamate--tRNA ligase.